Here is a 106-residue protein sequence, read N- to C-terminus: UPF0091 protein RP266 (106 aa).

It belongs to the UPF0091 family.

In Rickettsia prowazekii (strain Madrid E), this protein is UPF0091 protein RP266.